We begin with the raw amino-acid sequence, 431 residues long: 23S rRNA (uracil(1939)-C(5))-methyltransferase RlmD (431 aa).

The region spanning R10–R68 is the TRAM domain. 4 residues coordinate [4Fe-4S] cluster: C81, C87, C90, and C161. Residues Q264, F293, N298, E314, N341, and D362 each coordinate S-adenosyl-L-methionine. Residue C388 is the Nucleophile of the active site.

The protein belongs to the class I-like SAM-binding methyltransferase superfamily. RNA M5U methyltransferase family. RlmD subfamily.

The enzyme catalyses uridine(1939) in 23S rRNA + S-adenosyl-L-methionine = 5-methyluridine(1939) in 23S rRNA + S-adenosyl-L-homocysteine + H(+). Functionally, catalyzes the formation of 5-methyl-uridine at position 1939 (m5U1939) in 23S rRNA. The protein is 23S rRNA (uracil(1939)-C(5))-methyltransferase RlmD of Salmonella typhimurium (strain LT2 / SGSC1412 / ATCC 700720).